Here is a 309-residue protein sequence, read N- to C-terminus: MQAVLQSAHSSRRLMLLLSMLLNAAIQPRSIIVSATDDVANVSPCEMESLINQLMSPSPEYQLHASALRNQLKNLLRERQLAVGEEQPLGEYPDYLEEDKRSVAALAAQGLLNAPKRSLATLAKNGQLPTAEPGEDYGDADSGEPSEQKRYIGSLARAGGLMTYGKRNVGTLARDFQLPIPNGKRNIATMARLQSAPSTHRDPKRNVAAVARYNSQHGHIQRAGAEKRNLGALKSSPVHGVQQKREDEEMLLPAAAPDYADPMQSYWWYPSYAGYADLDWNDYRRAEKRFLGRVLPPTRATASTHRSRL.

Positions 1 to 28 are cleaved as a signal peptide; it reads MQAVLQSAHSSRRLMLLLSMLLNAAIQP. A propeptide spanning residues 29-99 is cleaved from the precursor; sequence RSIIVSATDD…GEYPDYLEED (71 aa). Positions 126-147 are disordered; sequence GQLPTAEPGEDYGDADSGEPSE. Acidic residues predominate over residues 133–144; it reads PGEDYGDADSGE. Tyr164 carries the post-translational modification Tyrosine amide. At Asn182 the chain carries Asparagine amide.

As to expression, MTYamide peptide: Expressed in the larval CNS (at protein level). NAP peptide: Expressed in the larval CNS (at protein level). IPNamide peptide: Expressed in the ventral ganglion of the third larval instar and adult brain (at protein level).

Its subcellular location is the secreted. Its function is as follows. Acts as a ligand for the receptor-type guanylate cyclase Gyc76C. Stimulates Gyc76c-dependent cGMP production and modulates the IMD innate immune pathway in response to salt stress by inducing nuclear translocation of NF-kappa-B protein Rel which leads to increased expression of the antimicrobial peptide diptericin. Does not appear to play a role in Gyc76C-mediated wing development. The sequence is that of Neuropeptide-like 1 (Nplp1) from Drosophila melanogaster (Fruit fly).